We begin with the raw amino-acid sequence, 262 residues long: Outer membrane protein assembly factor BamD (262 aa).

The N-terminal stretch at 1-18 is a signal peptide; the sequence is MRKIKSLALLAVAALVIG. A lipid anchor (N-palmitoyl cysteine) is attached at Cys-19. Cys-19 is lipidated: S-diacylglycerol cysteine.

This sequence belongs to the BamD family. In terms of assembly, part of the Bam complex.

Its subcellular location is the cell outer membrane. In terms of biological role, part of the outer membrane protein assembly complex, which is involved in assembly and insertion of beta-barrel proteins into the outer membrane. In Haemophilus influenzae (strain ATCC 51907 / DSM 11121 / KW20 / Rd), this protein is Outer membrane protein assembly factor BamD.